The chain runs to 512 residues: MSYQYPSGFPGYPGYPGGDPSYPPAAQQAFPGGQFPPAAGGGAFPPASGGGNAPPPGGGYPHAGGYPAPGGYPGGMPSYPGAPGFGAPAGGQGYGAPPGAPAYGVPGYGGPGFNAPAGGYGAPNAGGFGVPPAGGYGSPGGAPGYGGFSQPSSQSYGAGGPGQMPGQMPGQMPGQAPSGYPSGPAPAQPTPYAAAMTATQGTIKAAPNFDALSDAEKLRKAMKGFGTDEKPIDVVANRSNDQRQKIQAAFKTAYGKDLIKDLKSELSGNVEELIIALFMPSTYYDAWSLYNAMKGAGTQERVLIEILCTRTNSEIRNIVACYKQEFGREIEKDIRSDTSGHFERLLISIMARGIVDESQNVNMQQAEQDAQRLYQAGEGKLGTDESSFNLVLASRSFPQLKAVAEAYARISKRDLLSVIGREFSGYIEDGLKAVLQCAINRPLFFRDRLCRSMKGAGTDDSTLIRIIVTRSEIDLVQIKQAYVQMYQKSLSAAISSDTSGAYKRMLLAISGH.

Over residues 14-38 (GYPGGDPSYPPAAQQAFPGGQFPPA) the composition is skewed to low complexity. 2 disordered regions span residues 14 to 62 (GYPG…GYPH) and 146 to 190 (GGFS…AQPT). Positions 39–52 (AGGGAFPPASGGGN) are enriched in gly residues. Positions 164 to 182 (MPGQMPGQMPGQAPSGYPS) are enriched in low complexity. Annexin repeat units follow at residues 209 to 279 (FDAL…ALFM), 280 to 351 (PSTY…SIMA), 364 to 436 (QQAE…AVLQ), and 440 to 511 (NRPL…AISG).

Belongs to the annexin family.

Its function is as follows. Calcium/phospholipid-binding protein which promotes membrane fusion and is involved in exocytosis. The polypeptide is Annexin A7 (anxa7) (Xenopus laevis (African clawed frog)).